The primary structure comprises 146 residues: VQWSSSERSTISTLWGKINVAEIGPQALARVLIVYPWTQRYFGKFGDLSSVAAIVGNANGAKHGRTVLQALGQAVNNMDNIKGTYAKLSQKHSEELNVDPDNFRLLGDCLTVVLATKFGAEFPPEVQAVWQKFVAVVVSALSRQYF.

One can recognise a Globin domain in the interval 2 to 146; that stretch reads QWSSSERSTI…VVSALSRQYF (145 aa). Heme b contacts are provided by histidine 63 and histidine 92.

It belongs to the globin family. As to quaternary structure, heterotetramer of two alpha chains and two beta chains. As to expression, red blood cells.

Functionally, involved in oxygen transport from the gills to the various peripheral tissues. In Conger conger (Conger eel), this protein is Hemoglobin cathodic subunit beta.